The primary structure comprises 345 residues: D-alanine--D-alanine ligase (345 aa).

The ATP-grasp domain maps to 133–332 (KWLCHARGVK…LPHTKRAKVT (200 aa)). 160-211 (AYPIIVKPSRLGSSIGVSIVKDESKLDYALDSAFEFDNTVIVEPFLEGVKEY) provides a ligand contact to ATP. Residues D284, E296, and N298 each coordinate Mg(2+).

The protein belongs to the D-alanine--D-alanine ligase family. The cofactor is Mg(2+). Mn(2+) serves as cofactor.

It is found in the cytoplasm. It carries out the reaction 2 D-alanine + ATP = D-alanyl-D-alanine + ADP + phosphate + H(+). It participates in cell wall biogenesis; peptidoglycan biosynthesis. Cell wall formation. The chain is D-alanine--D-alanine ligase from Sulfurimonas denitrificans (strain ATCC 33889 / DSM 1251) (Thiomicrospira denitrificans (strain ATCC 33889 / DSM 1251)).